Here is a 689-residue protein sequence, read N- to C-terminus: Glycine--tRNA ligase beta subunit (689 aa).

Belongs to the class-II aminoacyl-tRNA synthetase family. Tetramer of two alpha and two beta subunits.

The protein localises to the cytoplasm. It carries out the reaction tRNA(Gly) + glycine + ATP = glycyl-tRNA(Gly) + AMP + diphosphate. The sequence is that of Glycine--tRNA ligase beta subunit from Shigella boydii serotype 4 (strain Sb227).